The chain runs to 320 residues: MIDFRPFYQQIATSHLSAWLETLPLQLKQWEKTAHSDYAKWAKIATSMPTSPTSINLTDKVEAVLAEALPEGEKQYLIYRLKQLMPWRKGPYHLHGVHIDTEWRSDFKWQRVLPHLAPLKDRTILDVGCGNGYHMWRMVGEDAQMVVGIDPTELFLCQFEAVRQLLGNDRRANLIPLGLEQMQPLAAFDTVFSMGVLYHRKSPLDHLSQLKAQLVKGGELVLETLIIDGDINDILTPADRYAKMKNVYFIPSVAALINWLKKIGFKNARCVDQSVTTLAEQRKTEWLENESLVDFLDPTDQRKTIEGLPAPKRAVILANA.

Carboxy-S-adenosyl-L-methionine-binding positions include Lys-89, Trp-103, Lys-108, Gly-128, 150-152 (DPT), 179-180 (LE), Met-194, Tyr-198, and Arg-313.

The protein belongs to the class I-like SAM-binding methyltransferase superfamily. CmoB family. In terms of assembly, homotetramer.

The catalysed reaction is carboxy-S-adenosyl-L-methionine + 5-hydroxyuridine(34) in tRNA = 5-carboxymethoxyuridine(34) in tRNA + S-adenosyl-L-homocysteine + H(+). Functionally, catalyzes carboxymethyl transfer from carboxy-S-adenosyl-L-methionine (Cx-SAM) to 5-hydroxyuridine (ho5U) to form 5-carboxymethoxyuridine (cmo5U) at position 34 in tRNAs. In Haemophilus ducreyi (strain 35000HP / ATCC 700724), this protein is tRNA U34 carboxymethyltransferase.